Consider the following 361-residue polypeptide: Phosphoserine aminotransferase (361 aa).

An L-glutamate-binding site is contributed by arginine 43. Pyridoxal 5'-phosphate-binding positions include 77–78 (AS), tryptophan 103, threonine 153, aspartate 173, and glutamine 196. At lysine 197 the chain carries N6-(pyridoxal phosphate)lysine. Residue 238-239 (NT) coordinates pyridoxal 5'-phosphate.

Belongs to the class-V pyridoxal-phosphate-dependent aminotransferase family. SerC subfamily. In terms of assembly, homodimer. Requires pyridoxal 5'-phosphate as cofactor.

The protein resides in the cytoplasm. The catalysed reaction is O-phospho-L-serine + 2-oxoglutarate = 3-phosphooxypyruvate + L-glutamate. It catalyses the reaction 4-(phosphooxy)-L-threonine + 2-oxoglutarate = (R)-3-hydroxy-2-oxo-4-phosphooxybutanoate + L-glutamate. The protein operates within amino-acid biosynthesis; L-serine biosynthesis; L-serine from 3-phospho-D-glycerate: step 2/3. It participates in cofactor biosynthesis; pyridoxine 5'-phosphate biosynthesis; pyridoxine 5'-phosphate from D-erythrose 4-phosphate: step 3/5. Catalyzes the reversible conversion of 3-phosphohydroxypyruvate to phosphoserine and of 3-hydroxy-2-oxo-4-phosphonooxybutanoate to phosphohydroxythreonine. This chain is Phosphoserine aminotransferase, found in Pseudomonas syringae pv. syringae (strain B728a).